Consider the following 220-residue polypeptide: ATP-dependent Clp protease proteolytic subunit (220 aa).

Serine 125 (nucleophile) is an active-site residue. Histidine 150 is an active-site residue.

This sequence belongs to the peptidase S14 family. In terms of assembly, fourteen ClpP subunits assemble into 2 heptameric rings which stack back to back to give a disk-like structure with a central cavity, resembling the structure of eukaryotic proteasomes.

It is found in the cytoplasm. It catalyses the reaction Hydrolysis of proteins to small peptides in the presence of ATP and magnesium. alpha-casein is the usual test substrate. In the absence of ATP, only oligopeptides shorter than five residues are hydrolyzed (such as succinyl-Leu-Tyr-|-NHMec, and Leu-Tyr-Leu-|-Tyr-Trp, in which cleavage of the -Tyr-|-Leu- and -Tyr-|-Trp bonds also occurs).. Its function is as follows. Cleaves peptides in various proteins in a process that requires ATP hydrolysis. Has a chymotrypsin-like activity. Plays a major role in the degradation of misfolded proteins. This Bacteroides fragilis (strain YCH46) protein is ATP-dependent Clp protease proteolytic subunit.